The chain runs to 946 residues: Bifunctional glutamine synthetase adenylyltransferase/adenylyl-removing enzyme (946 aa).

The adenylyl removase stretch occupies residues 1–440; the sequence is MKPLSSPLQQ…VFNELIGDDE (440 aa). Residues 449 to 946 are adenylyl transferase; the sequence is SEQWRELWQD…ASWQKWLVEE (498 aa).

This sequence belongs to the GlnE family. It depends on Mg(2+) as a cofactor.

The catalysed reaction is [glutamine synthetase]-O(4)-(5'-adenylyl)-L-tyrosine + phosphate = [glutamine synthetase]-L-tyrosine + ADP. It catalyses the reaction [glutamine synthetase]-L-tyrosine + ATP = [glutamine synthetase]-O(4)-(5'-adenylyl)-L-tyrosine + diphosphate. Its function is as follows. Involved in the regulation of glutamine synthetase GlnA, a key enzyme in the process to assimilate ammonia. When cellular nitrogen levels are high, the C-terminal adenylyl transferase (AT) inactivates GlnA by covalent transfer of an adenylyl group from ATP to specific tyrosine residue of GlnA, thus reducing its activity. Conversely, when nitrogen levels are low, the N-terminal adenylyl removase (AR) activates GlnA by removing the adenylyl group by phosphorolysis, increasing its activity. The regulatory region of GlnE binds the signal transduction protein PII (GlnB) which indicates the nitrogen status of the cell. The protein is Bifunctional glutamine synthetase adenylyltransferase/adenylyl-removing enzyme of Escherichia coli (strain SE11).